A 142-amino-acid polypeptide reads, in one-letter code: Hemoglobin subunit alpha-5 (142 aa).

The region spanning Thr-2–Arg-142 is the Globin domain. Residue His-59 coordinates O2. Heme b is bound at residue His-88.

Belongs to the globin family. In terms of assembly, heterotetramer of two alpha chains and two beta chains. As to expression, red blood cells.

This is a larval (tadpole) alpha-globin. This is Hemoglobin subunit alpha-5 (hba5) from Xenopus laevis (African clawed frog).